The sequence spans 145 residues: Large ribosomal subunit protein mL59 (145 aa).

Basic and acidic residues predominate over residues 123–135 (LKKTSKFKNERQK). The tract at residues 123–145 (LKKTSKFKNERQKASKIAKPSPF) is disordered.

This sequence belongs to the mitochondrion-specific ribosomal protein mL59 family. In terms of assembly, component of the mitochondrial large ribosomal subunit (mt-LSU). Mature yeast 74S mitochondrial ribosomes consist of a small (37S) and a large (54S) subunit. The 37S small subunit contains a 15S ribosomal RNA (15S mt-rRNA) and at least 32 different proteins. The 54S large subunit contains a 21S rRNA (21S mt-rRNA) and at least 45 different proteins.

Its subcellular location is the mitochondrion. Component of the mitochondrial ribosome (mitoribosome), a dedicated translation machinery responsible for the synthesis of mitochondrial genome-encoded proteins, including at least some of the essential transmembrane subunits of the mitochondrial respiratory chain. The mitoribosomes are attached to the mitochondrial inner membrane and translation products are cotranslationally integrated into the membrane. This Schizosaccharomyces pombe (strain 972 / ATCC 24843) (Fission yeast) protein is Large ribosomal subunit protein mL59 (mrpl25).